The primary structure comprises 196 residues: Dehydrogenase RED3 (196 aa).

Positions 47, 74, 101, 134, 166, and 170 each coordinate NADP(+). Tyrosine 166 (proton acceptor) is an active-site residue. The Lowers pKa of active site Tyr role is filled by lysine 170.

The protein belongs to the short-chain dehydrogenases/reductases (SDR) family.

The catalysed reaction is a primary alcohol + NAD(+) = an aldehyde + NADH + H(+). The enzyme catalyses a secondary alcohol + NAD(+) = a ketone + NADH + H(+). It functions in the pathway mycotoxin biosynthesis. Functionally, dehydrogenase; part of the Tox1B locus, one of the 2 loci that mediate the biosynthesis of T-toxin, a family of linear polyketides 37 to 45 carbons in length, of which the major component is 41 carbons, and which leads to high virulence to maize. One of the PKSs (PKS1 or PKS2) could synthesize a precursor, used subsequently by the other PKS as starter unit, to add additional carbons. Variability in the length of the final carbon backbone C35-47 could be achieved by varying the number of condensation cycles, or use of different starter or extender units or might be due to decarboxylation of the penultimate product, catalyzed by DEC1. Additional proteins are required for the biosynthesis of T-toxin, including oxidoreductases RED1, RED2, RED3, LAM1 and OXI1, as well as esterase TOX9. The sequence is that of Dehydrogenase RED3 from Cochliobolus heterostrophus (strain C4 / ATCC 48331 / race T) (Southern corn leaf blight fungus).